The following is a 251-amino-acid chain: Cell division protein ZapD (251 aa).

The protein belongs to the ZapD family. Interacts with FtsZ.

Its subcellular location is the cytoplasm. Functionally, cell division factor that enhances FtsZ-ring assembly. Directly interacts with FtsZ and promotes bundling of FtsZ protofilaments, with a reduction in FtsZ GTPase activity. This is Cell division protein ZapD from Azoarcus sp. (strain BH72).